The sequence spans 556 residues: MTSDQRPARLPTHKGKLLAPHRLHRLIPVSVALTTVCAALPSSTAYAADTPPTPHLDAIERSLRDTSPGLEGSVWQRTDGNRLDAPDGDPAGWLLQTPGCWGDAGCKDRAGTRRLLDKMTRNIADARHTVDISSLAPFPNGGFEDAVVDGLKAVVAAGHSPRVRILVGAAPIYHLNVVPSRYRDELIGKLGAAAGKVTLNVASMTTSKTSLSWNHSKLLVVDGKTAITGGINGWKDDYLDTAHPVSDVDMALSGPAAASAGKYLDTLWDWTCRNASDPAKVWLATSNGASCMPSMEQDEAGSAPAEPTGDVPVIAVGGLGVGIKESDPSSGYHPDLPTAPDTKCTVGLHDNTNADRDYDTVNPEENALRSLIASARSHVEISQQDLNATCPPLPRYDIRTYDTLAGKLAAGVKVRIVVSDPANRGAVGSGGYSQIKSLDEISDTLRTRLVALTGDNEKASRALCGNLQLASFRSSDAAKWADGKPYALHHKLVSVDDSAFYIGSKNLYPAWLQDFGYIVESPAAAQQLKTELLDPEWKYSQQAAATPAGCPARQAG.

Residues 1–47 (MTSDQRPARLPTHKGKLLAPHRLHRLIPVSVALTTVCAALPSSTAYA) form the signal peptide. The region spanning 210–237 (SLSWNHSKLLVVDGKTAITGGINGWKDD) is the PLD phosphodiesterase 1 domain. The interval 326 to 360 (SDPSSGYHPDLPTAPDTKCTVGLHDNTNADRDYDT) is disordered. A PLD phosphodiesterase 2 domain is found at 484–511 (KPYALHHKLVSVDDSAFYIGSKNLYPAW).

This sequence belongs to the phospholipase D family. In terms of processing, probably has at least 1 disulfide bond.

The protein localises to the secreted. The catalysed reaction is a 1,2-diacyl-sn-glycero-3-phosphocholine + H2O = a 1,2-diacyl-sn-glycero-3-phosphate + choline + H(+). Its activity is regulated as follows. Inhibited by mercaptoethanol and dithiothreitol. A reversible phospholipase active on phosphatidylcholine (PC) and phosphatidylethanolamine. Lysophosphatidylcholine and egg sphingomyelin are hydrolyzed about 50 times and 100 times more slowly than PC, respectively. During the transphosphatidylation reaction straight-chain hydroxy compounds, such as triethyleneglycol and triethyleneglycol monomethyl ether, were phosphatidylated in good yield, as were monosaccharides. Disaccharides and sugar alcohol reacted slowly, while N-acetyl-D-galactosamine, D-galactosamine and D-galacturonic acid were not phosphatidylated. In Streptomyces antibioticus, this protein is Phospholipase D.